Reading from the N-terminus, the 963-residue chain is Vacuolar membrane protease (963 aa).

Residues 1 to 15 (MVSSRRGFNPIAFTP) lie on the Cytoplasmic side of the membrane. A helical transmembrane segment spans residues 16-36 (WPVTILTSLVYLALIIPIIVV). The Vacuolar portion of the chain corresponds to 37-391 (HHLVPPAPKQ…FQLNTLFGLS (355 aa)). Asn-111 and Asn-114 each carry an N-linked (GlcNAc...) asparagine glycan. 2 residues coordinate Zn(2+): His-170 and Asp-182. Glu-216 acts as the Proton acceptor in catalysis. Residues Glu-217, Glu-242, and His-315 each coordinate Zn(2+). Residues 392 to 412 (VALLVVAPLLLILTSVALFAV) form a helical membrane-spanning segment. Over 413–441 (DKMYMFSMYTYLSESGGQVSLYGLRGMFR) the chain is Cytoplasmic. Residues 442–462 (FPLILGISTALTVALAFLIMK) form a helical membrane-spanning segment. The Vacuolar segment spans residues 463–473 (VNPFIIYSSPY). The helical transmembrane segment at 474–494 (AVWSMMLSTCMFFAWFISCVA) threads the bilayer. The Cytoplasmic segment spans residues 495–504 (DFARPSALHR). A helical transmembrane segment spans residues 505-525 (AYAFSWMFGILWVFLVIATVY). Residues 526 to 535 (QRQHGIASSY) lie on the Vacuolar side of the membrane. A helical transmembrane segment spans residues 536-556 (FIVFYFAGVSVATWISYLELF). Over 557–668 (GLSTTQDYAR…WSIYLVSSAW (112 aa)) the chain is Cytoplasmic. A disordered region spans residues 569 to 618 (SRLSDRTPSSDSHLLAPSADELPSSGSVAGRDFNPEDVEDEEPTESTSLL). A compositionally biased stretch (acidic residues) spans 603–612 (PEDVEDEEPT). A helical transmembrane segment spans residues 669-689 (ILQFLLVAPIVLILLGQLGLF). At 690–705 (LTSATYQIGADGGSQF) the chain is on the vacuolar side. Residues 706-726 (IIYIGIAVLSVLILLPLFPFI) traverse the membrane as a helical segment. The Cytoplasmic segment spans residues 727–732 (HRFTYH). Residues 733–753 (IPTFMLFVLIGTLVYNLTAFP) traverse the membrane as a helical segment. Residues 754 to 963 (FSHNSRLKVA…LVEGSYSFKL (210 aa)) lie on the Vacuolar side of the membrane. An N-linked (GlcNAc...) asparagine glycan is attached at Asn-835.

It belongs to the peptidase M28 family. Zn(2+) serves as cofactor.

It localises to the vacuole membrane. May be involved in vacuolar sorting and osmoregulation. This chain is Vacuolar membrane protease, found in Arthroderma gypseum (strain ATCC MYA-4604 / CBS 118893) (Microsporum gypseum).